The primary structure comprises 495 residues: Protein adenylyltransferase Fic (495 aa).

Residues 1–27 (MGTEAEQPSPPSPPAQQQEQTNPPLWN) form a disordered region. Residues 36-55 (LYRLVLFFIAGSLAAWTIHA) traverse the membrane as a helical segment. TPR repeat units follow at residues 121-154 (ALVS…APRH) and 155-189 (PEVL…SPSN). Residues 246–251 (SVGIEG) carry the Inhibitory (S/T)XXXE(G/N) motif motif. Residues glutamate 250 and 331–334 (VGGH) each bind ATP. A Fido domain is found at 300 to 435 (ITIKDILELH…IRPFVRFIAD (136 aa)). Residue histidine 378 is part of the active site. ATP contacts are provided by residues 382 to 389 (DGNGRTSR), 414 to 415 (YY), and asparagine 422.

This sequence belongs to the fic family. Homodimer.

The protein localises to the membrane. The enzyme catalyses L-tyrosyl-[protein] + ATP = O-(5'-adenylyl)-L-tyrosyl-[protein] + diphosphate. The catalysed reaction is L-threonyl-[protein] + ATP = 3-O-(5'-adenylyl)-L-threonyl-[protein] + diphosphate. It catalyses the reaction 3-O-(5'-adenylyl)-L-threonyl-[protein] + H2O = L-threonyl-[protein] + AMP + H(+). The side chain of Glu-250 determines which of the two opposing activities (AMPylase or de-AMPylase) will take place. In response to endoplasmic reticulum stress, mediates de-AMPylase activity. Adenylyltransferase activity is inhibited by the inhibitory helix present at the N-terminus: Glu-250 binds ATP and competes with ATP-binding at Arg-389, thereby preventing adenylyltransferase activity. In unstressed cells, disengagement of Glu-250 promotes adenylyltransferase activity. Activation dissociates ATP-binding from Glu-250, allowing ordered binding of the entire ATP moiety with the alpha-phosphate in an orientation that is productive for accepting an incoming target hydroxyl side chain. In terms of biological role, protein that can both mediate the addition of adenosine 5'-monophosphate (AMP) to specific residues of target proteins (AMPylation), and the removal of the same modification from target proteins (de-AMPylation), depending on the context. The side chain of Glu-250 determines which of the two opposing activities (AMPylase or de-AMPylase) will take place. Acts as a key regulator of the unfolded protein response (UPR) by mediating AMPylation or de-AMPylation of Hsc70-3/BiP. In unstressed cells, acts as an adenylyltransferase by mediating AMPylation of Hsc70-3/BiP at 'Thr-518', thereby inactivating it. In response to endoplasmic reticulum stress, acts as a phosphodiesterase by mediating removal of ATP (de-AMPylation) from Hsc70-3/BiP at 'Thr-518', leading to restore HSPA5/BiP activity. The sequence is that of Protein adenylyltransferase Fic from Drosophila yakuba (Fruit fly).